A 276-amino-acid polypeptide reads, in one-letter code: NH(3)-dependent NAD(+) synthetase (276 aa).

Residue 43-50 coordinates ATP; the sequence is GISGGVDS. Aspartate 49 contacts Mg(2+). Position 146 (arginine 146) interacts with deamido-NAD(+). Residue threonine 166 participates in ATP binding. Glutamate 171 contacts Mg(2+). The deamido-NAD(+) site is built by lysine 179 and aspartate 186. ATP contacts are provided by lysine 195 and threonine 217. Residue 266–267 participates in deamido-NAD(+) binding; it reads HK.

The protein belongs to the NAD synthetase family. Homodimer.

It carries out the reaction deamido-NAD(+) + NH4(+) + ATP = AMP + diphosphate + NAD(+) + H(+). It functions in the pathway cofactor biosynthesis; NAD(+) biosynthesis; NAD(+) from deamido-NAD(+) (ammonia route): step 1/1. Catalyzes the ATP-dependent amidation of deamido-NAD to form NAD. Uses ammonia as a nitrogen source. The sequence is that of NH(3)-dependent NAD(+) synthetase from Vibrio atlanticus (strain LGP32) (Vibrio splendidus (strain Mel32)).